A 198-amino-acid polypeptide reads, in one-letter code: Recombination protein RecR (198 aa).

The segment at Cys-57–Cys-72 adopts a C4-type zinc-finger fold. The region spanning Thr-80–Pro-175 is the Toprim domain.

The protein belongs to the RecR family.

Its function is as follows. May play a role in DNA repair. It seems to be involved in an RecBC-independent recombinational process of DNA repair. It may act with RecF and RecO. The sequence is that of Recombination protein RecR from Burkholderia vietnamiensis (strain G4 / LMG 22486) (Burkholderia cepacia (strain R1808)).